A 281-amino-acid polypeptide reads, in one-letter code: 2-dehydro-3-deoxyphosphooctonate aldolase (281 aa).

The protein belongs to the KdsA family.

It localises to the cytoplasm. The enzyme catalyses D-arabinose 5-phosphate + phosphoenolpyruvate + H2O = 3-deoxy-alpha-D-manno-2-octulosonate-8-phosphate + phosphate. The protein operates within carbohydrate biosynthesis; 3-deoxy-D-manno-octulosonate biosynthesis; 3-deoxy-D-manno-octulosonate from D-ribulose 5-phosphate: step 2/3. Its pathway is bacterial outer membrane biogenesis; lipopolysaccharide biosynthesis. The chain is 2-dehydro-3-deoxyphosphooctonate aldolase from Pseudomonas syringae pv. tomato (strain ATCC BAA-871 / DC3000).